The chain runs to 118 residues: IgW heavy chain V region W26 (118 aa).

In terms of domain architecture, Ig-like spans 1–109; it reads NIVLTQPESA…PQWGYWGSGT (109 aa). Cysteines 22 and 93 form a disulfide.

Expressed mainly in lymphoid tissues including spleen, epigonal organ and circulating lymphocytes.

The sequence is that of IgW heavy chain V region W26 from Heterodontus francisci (Horn shark).